The primary structure comprises 260 residues: Thymidylate synthase (260 aa).

It functions in the pathway pyrimidine metabolism; dTTP biosynthesis. Its function is as follows. Is able to catalyze the biosynthesis of dTMP using dUMP, tetrahydrofolate and formaldehyde in vitro, i.e. a reaction equivalent to that catalyzed by bacterial thymidylate synthases (EC 2.1.1.45). However, M.jannaschii like most methanogenic Archaea lacks folates, thus the physiological cosubstrate is unknown but is likely one of the non-methylated methanopterin biosynthetic intermediates. In Methanocaldococcus jannaschii (strain ATCC 43067 / DSM 2661 / JAL-1 / JCM 10045 / NBRC 100440) (Methanococcus jannaschii), this protein is Thymidylate synthase.